Reading from the N-terminus, the 614-residue chain is Vitamin B12 transporter BtuB (614 aa).

Positions 1–20 (MIKKASLLTACSVTAFSAWA) are cleaved as a signal peptide. Residues 26–33 (DTLVVTAN) carry the TonB box motif. Residues 38–152 (PRSTVLAPTT…IGGVVNIITT (115 aa)) form the TBDR plug domain. Cyanocob(III)alamin contacts are provided by residues Leu-83, Ser-85, Asn-92, and 110–111 (VS). Positions 155-614 (EPGTEISAGW…EYTLSGSYTF (460 aa)) constitute a TBDR beta-barrel domain. A run of 3 beta stranded transmembrane segments spans residues 158 to 165 (TEISAGWG), 169 to 178 (YQNYDVSTQQ), and 184 to 195 (TRVTLLGDYAHT). Ca(2+) contacts are provided by Asp-199, Gln-211, Asp-213, and Asp-215. Transmembrane regions (beta stranded) follow at residues 217-227 (FLSKTLYGALE) and 232-248 (DAWSGFVRGYGYDNRTN). Residues Tyr-249 and Asp-250 each contribute to the Ca(2+) site. Ala-251 serves as a coordination point for cyanocob(III)alamin. Asp-261 contacts Ca(2+). The next 14 beta stranded transmembrane spans lie at 263 to 277 (RKLYSQSWDAGLRYN), 279 to 296 (ELIKSQLITSYSHSKDYN), 309 to 325 (TLDEMKQYTVQWANNII), 328 to 337 (HGNVGAGVDW), 353 to 369 (YDQRNTGIYLTGLQQVG), 371 to 381 (FTFEGAARSDD), 385 to 400 (FGRHGTWQTSAGWEFI), 403 to 417 (YRFIASYGTSYKAPN), 434 to 443 (KSKQWEGAFE), 449 to 458 (VNWRISGYRN), 473 to 490 (YYNEGKARIKGVEATANF), 494 to 509 (PLTHTVSYDYVDARNA), 517 to 529 (RRAKQQVKYQLDW), and 535 to 550 (DWGITYQYLGTRYDKD). Position 309 (Thr-309) interacts with cyanocob(III)alamin. Arg-517 contacts cyanocob(III)alamin. Tyr-551 is a binding site for cyanocob(III)alamin. 3 consecutive transmembrane segments (beta stranded) span residues 558 to 572 (TVKMGGVSLWDLAVA), 585 to 596 (IANLFDKDYETV), and 602 to 614 (AGREYTLSGSYTF). The short motif at 597–614 (YGYQTAGREYTLSGSYTF) is the TonB C-terminal box element.

It belongs to the TonB-dependent receptor family. BtuB (TC 1.B.14.3.1) subfamily.

Its subcellular location is the cell outer membrane. In terms of biological role, involved in the active translocation of vitamin B12 (cyanocobalamin) across the outer membrane to the periplasmic space. It derives its energy for transport by interacting with the trans-periplasmic membrane protein TonB. The protein is Vitamin B12 transporter BtuB of Shigella dysenteriae serotype 1 (strain Sd197).